The following is a 94-amino-acid chain: Fungal defensin scedosporisin-2 (94 aa).

Residues Met1–Ala25 form the signal peptide. Positions Asp26 to Cys56 are excised as a propeptide. 3 residues coordinate beta-D-GlcNAc-(1-&gt;4)-Mur2Ac(oyl-L-Ala-gamma-D-Glu-L-Lys-D-Ala-D-Ala)-di-trans,octa-cis-undecaprenyl diphosphate: Phe54, Gly55, and Cys56. 3 cysteine pairs are disulfide-bonded: Cys56–Cys78, Cys63–Cys91, and Cys67–Cys93. An interaction site with membrane interface region spans residues Pro57–Glu60. His66 contributes to the beta-D-GlcNAc-(1-&gt;4)-Mur2Ac(oyl-L-Ala-gamma-D-Glu-L-Lys-D-Ala-D-Ala)-di-trans,octa-cis-undecaprenyl diphosphate binding site. Positions Ile83–Arg90 are interaction site with membrane interface. Cys91 is a beta-D-GlcNAc-(1-&gt;4)-Mur2Ac(oyl-L-Ala-gamma-D-Glu-L-Lys-D-Ala-D-Ala)-di-trans,octa-cis-undecaprenyl diphosphate binding site.

The protein belongs to the invertebrate defensin family.

It localises to the secreted. The protein resides in the target cell membrane. Antibacterial peptide potently active against Gram-positive bacteria. May act by selectively inhibiting peptidoglycan biosynthesis through complex formation with the cell wall precursor lipid II (1:1 molar ratio) thus inhibiting cell wall synthesis. Shows remarkably activity against resistant isolates such as methicillin-resistant Staphylococcus aureus (MRSA) and vancomycin-resistant Enterococci (VRE) at the concentration of micromolar level. Does not act by destroying the membrane integrity, which is consistent with its nonamphiphilic architecture. Acts more rapidly than vancomycin. Shows low hemolysis and cytotoxicity and high serum stability. In vivo, is as efficient as vancomycin to protect mouse peritonitis models from MRSA infections. The chain is Fungal defensin scedosporisin-2 from Pseudallescheria apiosperma (Scedosporium apiospermum).